The sequence spans 193 residues: uncharacterized protein (193 aa).

In terms of domain architecture, AMMECR1 spans 1 to 189 (MDKKEYCYYC…CTYEEYLHNL (189 aa)).

This is an uncharacterized protein from Schizosaccharomyces pombe (strain 972 / ATCC 24843) (Fission yeast).